Here is a 503-residue protein sequence, read N- to C-terminus: Cytochrome P450 3A17 (503 aa).

Cys442 lines the heme pocket.

Belongs to the cytochrome P450 family. Heme serves as cofactor.

It localises to the endoplasmic reticulum membrane. It is found in the microsome membrane. The catalysed reaction is an organic molecule + reduced [NADPH--hemoprotein reductase] + O2 = an alcohol + oxidized [NADPH--hemoprotein reductase] + H2O + H(+). Cytochromes P450 are a group of heme-thiolate monooxygenases. In liver microsomes, this enzyme is involved in an NADPH-dependent electron transport pathway. It oxidizes a variety of structurally unrelated compounds, including steroids, fatty acids, and xenobiotics. The polypeptide is Cytochrome P450 3A17 (CYP3A17) (Cavia porcellus (Guinea pig)).